The chain runs to 295 residues: Putative sugar uptake protein YxfA (295 aa).

Helical transmembrane passes span 4–26 (VLLA…KFGG), 33–50 (LGMT…FLFR), 54–72 (LTWQ…WAIG), 85–107 (VSVA…GVFA), 117–135 (FILG…YFSA), 156–178 (ALTY…AVLW), 188–206 (IILP…MGRF), 213–235 (YVYQ…LMAA), 241–263 (AIAF…LFLG), and 270–291 (ELVY…LAIV).

The protein belongs to the GRP transporter (TC 2.A.7.5) family.

Its subcellular location is the cell membrane. This chain is Putative sugar uptake protein YxfA (yxfA), found in Lactococcus lactis subsp. lactis (strain IL1403) (Streptococcus lactis).